A 238-amino-acid polypeptide reads, in one-letter code: Ribonuclease PH (238 aa).

Phosphate contacts are provided by residues R86 and 124–126 (GTR).

This sequence belongs to the RNase PH family. As to quaternary structure, homohexameric ring arranged as a trimer of dimers.

It carries out the reaction tRNA(n+1) + phosphate = tRNA(n) + a ribonucleoside 5'-diphosphate. In terms of biological role, phosphorolytic 3'-5' exoribonuclease that plays an important role in tRNA 3'-end maturation. Removes nucleotide residues following the 3'-CCA terminus of tRNAs; can also add nucleotides to the ends of RNA molecules by using nucleoside diphosphates as substrates, but this may not be physiologically important. Probably plays a role in initiation of 16S rRNA degradation (leading to ribosome degradation) during starvation. The sequence is that of Ribonuclease PH from Parvibaculum lavamentivorans (strain DS-1 / DSM 13023 / NCIMB 13966).